The primary structure comprises 732 residues: Alpha-galactosidase Mel36A (732 aa).

Substrate is bound by residues 370–371 (DD), tryptophan 415, arginine 447, 480–484 (KWDMN), 530–533 (CSGG), and aspartate 552. Aspartate 482 serves as the catalytic Nucleophile. The Proton donor role is filled by aspartate 552.

This sequence belongs to the glycosyl hydrolase 36 family. Homotetramer.

It catalyses the reaction Hydrolysis of terminal, non-reducing alpha-D-galactose residues in alpha-D-galactosides, including galactose oligosaccharides, galactomannans and galactolipids.. In terms of biological role, hydrolyzes the short-chain alpha-galactosaccharide raffinose. This chain is Alpha-galactosidase Mel36A, found in Lactobacillus acidophilus (strain ATCC 700396 / NCK56 / N2 / NCFM).